We begin with the raw amino-acid sequence, 427 residues long: Enolase (427 aa).

Gln-163 is a binding site for (2R)-2-phosphoglycerate. The active-site Proton donor is Glu-205. 3 residues coordinate Mg(2+): Asp-242, Glu-285, and Asp-312. (2R)-2-phosphoglycerate-binding residues include Lys-337, Arg-366, Ser-367, and Lys-388. The active-site Proton acceptor is Lys-337.

Belongs to the enolase family. Requires Mg(2+) as cofactor.

The protein localises to the cytoplasm. The protein resides in the secreted. It localises to the cell surface. It carries out the reaction (2R)-2-phosphoglycerate = phosphoenolpyruvate + H2O. It participates in carbohydrate degradation; glycolysis; pyruvate from D-glyceraldehyde 3-phosphate: step 4/5. In terms of biological role, catalyzes the reversible conversion of 2-phosphoglycerate (2-PG) into phosphoenolpyruvate (PEP). It is essential for the degradation of carbohydrates via glycolysis. This Burkholderia orbicola (strain MC0-3) protein is Enolase.